The following is a 1334-amino-acid chain: Aldehyde oxidase 3 (1334 aa).

The 2Fe-2S ferredoxin-type domain maps to 8-95 (DELIFFVNGK…GAAVTTVEGI (88 aa)). Positions 47, 52, 55, and 77 each coordinate [2Fe-2S] cluster. Glutamine 116 provides a ligand contact to Mo-molybdopterin. Residues cysteine 117, cysteine 120, cysteine 152, and cysteine 154 each coordinate [2Fe-2S] cluster. Residues 236 to 421 (FRGERTTWIA…ISVFVPLSRK (186 aa)) form the FAD-binding PCMH-type domain. FAD is bound at residue 264–271 (LVIGNTCL). Serine 320 carries the post-translational modification Phosphoserine. Positions 354, 358, 367, and 411 each coordinate FAD. Positions 801, 1042, and 1198 each coordinate Mo-molybdopterin. Catalysis depends on glutamate 1265, which acts as the Proton acceptor; for azaheterocycle hydroxylase activity.

It belongs to the xanthine dehydrogenase family. Homodimer. [2Fe-2S] cluster is required as a cofactor. FAD serves as cofactor. Requires Mo-molybdopterin as cofactor.

It localises to the cytoplasm. The enzyme catalyses an aldehyde + O2 + H2O = a carboxylate + H2O2 + H(+). In terms of biological role, oxidase with broad substrate specificity, oxidizing aromatic azaheterocycles, such as N1-methylnicotinamide and phthalazine, as well as aldehydes, such as benzaldehyde, retinal and pyridoxal. Plays a key role in the metabolism of xenobiotics and drugs containing aromatic azaheterocyclic substituents. Is probably involved in the regulation of reactive oxygen species homeostasis. Is a prominent source of superoxide generation via the one-electron reduction of molecular oxygen. Also catalyzes nitric oxide (NO) production; under anaerobic conditions, reduces nitrite to NO with NADH or aldehyde as electron donor, but under aerobic conditions, NADH is the preferred substrate. These reactions may be catalyzed by several isozymes. This is Aldehyde oxidase 3 (Aox3) from Rattus norvegicus (Rat).